A 421-amino-acid chain; its full sequence is Histidine--tRNA ligase (421 aa).

It belongs to the class-II aminoacyl-tRNA synthetase family. In terms of assembly, homodimer.

It localises to the cytoplasm. The enzyme catalyses tRNA(His) + L-histidine + ATP = L-histidyl-tRNA(His) + AMP + diphosphate + H(+). In Nitrosomonas eutropha (strain DSM 101675 / C91 / Nm57), this protein is Histidine--tRNA ligase.